A 446-amino-acid chain; its full sequence is Xylose isomerase 2 (446 aa).

Active-site residues include H109 and D112. The Mg(2+) site is built by E240, E276, H279, D304, D315, D317, and D347.

It belongs to the xylose isomerase family. As to quaternary structure, homotetramer. It depends on Mg(2+) as a cofactor.

The protein resides in the cytoplasm. It catalyses the reaction alpha-D-xylose = alpha-D-xylulofuranose. In Xanthomonas campestris pv. campestris (strain 8004), this protein is Xylose isomerase 2.